A 217-amino-acid polypeptide reads, in one-letter code: Peroxiredoxin (217 aa).

The Thioredoxin domain occupies 2-159; the sequence is AVIGEKFPDV…VVRLVKALQT (158 aa). Cys46 (cysteine sulfenic acid (-SOH) intermediate) is an active-site residue. Arg122 lines the substrate pocket.

The protein belongs to the peroxiredoxin family. Prx6 subfamily. As to quaternary structure, homodecamer. Pentamer of dimers that assemble into a ring structure.

The protein localises to the cytoplasm. The catalysed reaction is a hydroperoxide + [thioredoxin]-dithiol = an alcohol + [thioredoxin]-disulfide + H2O. Its function is as follows. Thiol-specific peroxidase that catalyzes the reduction of hydrogen peroxide and organic hydroperoxides to water and alcohols, respectively. Plays a role in cell protection against oxidative stress by detoxifying peroxides. The polypeptide is Peroxiredoxin (Methanococcus vannielii (strain ATCC 35089 / DSM 1224 / JCM 13029 / OCM 148 / SB)).